The following is a 293-amino-acid chain: Elongation factor Ts (293 aa).

An involved in Mg(2+) ion dislocation from EF-Tu region spans residues 80-83 (TDFV).

It belongs to the EF-Ts family.

It localises to the cytoplasm. In terms of biological role, associates with the EF-Tu.GDP complex and induces the exchange of GDP to GTP. It remains bound to the aminoacyl-tRNA.EF-Tu.GTP complex up to the GTP hydrolysis stage on the ribosome. This Enterococcus faecalis (strain ATCC 700802 / V583) protein is Elongation factor Ts.